The primary structure comprises 445 residues: Glucose-6-phosphate isomerase (445 aa).

The active-site Proton donor is Glu287. Catalysis depends on residues His308 and Lys422.

This sequence belongs to the GPI family.

It localises to the cytoplasm. The enzyme catalyses alpha-D-glucose 6-phosphate = beta-D-fructose 6-phosphate. It functions in the pathway carbohydrate biosynthesis; gluconeogenesis. It participates in carbohydrate degradation; glycolysis; D-glyceraldehyde 3-phosphate and glycerone phosphate from D-glucose: step 2/4. Its function is as follows. Catalyzes the reversible isomerization of glucose-6-phosphate to fructose-6-phosphate. The sequence is that of Glucose-6-phosphate isomerase from Bacteroides fragilis (strain ATCC 25285 / DSM 2151 / CCUG 4856 / JCM 11019 / LMG 10263 / NCTC 9343 / Onslow / VPI 2553 / EN-2).